Reading from the N-terminus, the 870-residue chain is Alanine--tRNA ligase (870 aa).

His585, His589, Cys689, and His693 together coordinate Zn(2+).

This sequence belongs to the class-II aminoacyl-tRNA synthetase family. Zn(2+) serves as cofactor.

It is found in the cytoplasm. It catalyses the reaction tRNA(Ala) + L-alanine + ATP = L-alanyl-tRNA(Ala) + AMP + diphosphate. Its function is as follows. Catalyzes the attachment of alanine to tRNA(Ala) in a two-step reaction: alanine is first activated by ATP to form Ala-AMP and then transferred to the acceptor end of tRNA(Ala). Also edits incorrectly charged Ser-tRNA(Ala) and Gly-tRNA(Ala) via its editing domain. The sequence is that of Alanine--tRNA ligase from Picrophilus torridus (strain ATCC 700027 / DSM 9790 / JCM 10055 / NBRC 100828 / KAW 2/3).